Reading from the N-terminus, the 238-residue chain is UPF0173 metal-dependent hydrolase Helmi_16730 (238 aa).

The protein belongs to the UPF0173 family.

The polypeptide is UPF0173 metal-dependent hydrolase Helmi_16730 (Heliobacterium modesticaldum (strain ATCC 51547 / Ice1)).